The primary structure comprises 174 residues: Actin-related protein 2/3 complex subunit 3 (174 aa).

It belongs to the ARPC3 family. In terms of assembly, component of the Arp2/3 complex composed of arpB/Arp2, arpC/Arp3, arcA/p41-arc, arcB/p34-arc, arcC/p21-arc, arcD/p20-arc and arcE/p16-arc. Interacts with carmil (via the region between the LRR domain and COOH-terminal proline-rich domain); carmil is required for Arp2/3-dependent actin nucleation. Arp2/3 complex, MyoB, MyoC, and the alpha and beta subunits of capping protein all form a larger complex with carmil.

Its subcellular location is the cytoplasm. It localises to the cytoskeleton. The protein resides in the cytosol. It is found in the cell cortex. The protein localises to the cell projection. Its subcellular location is the pseudopodium. Functions as a component of the Arp2/3 complex which is involved in regulation of actin polymerization and together with an activating nucleation-promoting factor (NPF) mediates the formation of branched actin networks. Seems to contact the pointed end of the daughter actin filament. The Arp2/3 complex is involved in organizing the actin system in cell motility and chemotaxis, in phagocytosis and macropinocytosis, at late steps of endosome processing, and in mitosis. In concert with a group of other proteins, the Arp2/3 complex plays a general role in the rapid activation and adaptation of the actin system to its multiple functions. The sequence is that of Actin-related protein 2/3 complex subunit 3 (arcC) from Dictyostelium discoideum (Social amoeba).